Reading from the N-terminus, the 224-residue chain is MENLKKQVGIKAAEFVKSGMVVGLGTGSTAAYFVEELGRRVAEEQLEITGVTTSSVTSEQAKALGIPLASIDEVDYVDLTVDGADEIDSHLNGIKGGGAALLMEKIVATYSKDYIWIVDESKLSENLGSFKVPVEVITYGSEQLFKEFERAAYAPTWRLNEEGEKLITDMQHFIIDLHIAKIENPQKLADELDLMVGVVEHGLFNGMVKKVIVAGSDGVKIISQ.

Substrate is bound by residues 26 to 29 (TGST), 82 to 85 (DGAD), and 95 to 98 (KGGG). Catalysis depends on Glu104, which acts as the Proton acceptor. Substrate is bound at residue Lys122.

Belongs to the ribose 5-phosphate isomerase family. As to quaternary structure, homodimer.

It catalyses the reaction aldehydo-D-ribose 5-phosphate = D-ribulose 5-phosphate. It participates in carbohydrate degradation; pentose phosphate pathway; D-ribose 5-phosphate from D-ribulose 5-phosphate (non-oxidative stage): step 1/1. Functionally, catalyzes the reversible conversion of ribose-5-phosphate to ribulose 5-phosphate. The sequence is that of Ribose-5-phosphate isomerase A from Lactococcus lactis subsp. cremoris (strain MG1363).